The sequence spans 367 residues: 5-amino-6-(D-ribitylamino)uracil--L-tyrosine 4-hydroxyphenyl transferase (367 aa).

A Radical SAM core domain is found at 54–288 (ITYIENWNIN…VYAISRLMFR (235 aa)). Cys-68, Cys-72, and Cys-75 together coordinate [4Fe-4S] cluster.

The protein belongs to the radical SAM superfamily. CofH family. In terms of assembly, consists of two subunits, CofG and CofH. The cofactor is [4Fe-4S] cluster.

The enzyme catalyses 5-amino-6-(D-ribitylamino)uracil + L-tyrosine + S-adenosyl-L-methionine = 5-amino-5-(4-hydroxybenzyl)-6-(D-ribitylimino)-5,6-dihydrouracil + 2-iminoacetate + 5'-deoxyadenosine + L-methionine + H(+). Its pathway is cofactor biosynthesis; coenzyme F0 biosynthesis. Its function is as follows. Catalyzes the radical-mediated synthesis of 5-amino-5-(4-hydroxybenzyl)-6-(D-ribitylimino)-5,6-dihydrouracil from 5-amino-6-(D-ribitylamino)uracil and L-tyrosine. In Methanothermobacter thermautotrophicus (strain ATCC 29096 / DSM 1053 / JCM 10044 / NBRC 100330 / Delta H) (Methanobacterium thermoautotrophicum), this protein is 5-amino-6-(D-ribitylamino)uracil--L-tyrosine 4-hydroxyphenyl transferase.